Consider the following 408-residue polypeptide: S-adenosylmethionine synthase (408 aa).

His15 provides a ligand contact to ATP. Asp17 contacts Mg(2+). Residue Glu43 coordinates K(+). Residues Glu56 and Gln100 each contribute to the L-methionine site. A flexible loop region spans residues 100 to 110; it reads QSPDIAQGVNE. Residues 171-173, 248-249, Asp257, 263-264, Ala280, and Lys284 each bind ATP; these read DGK, KF, and RK. Asp257 provides a ligand contact to L-methionine. Residue Lys288 coordinates L-methionine.

The protein belongs to the AdoMet synthase family. As to quaternary structure, homotetramer; dimer of dimers. Requires Mg(2+) as cofactor. K(+) is required as a cofactor.

Its subcellular location is the cytoplasm. It carries out the reaction L-methionine + ATP + H2O = S-adenosyl-L-methionine + phosphate + diphosphate. It functions in the pathway amino-acid biosynthesis; S-adenosyl-L-methionine biosynthesis; S-adenosyl-L-methionine from L-methionine: step 1/1. Catalyzes the formation of S-adenosylmethionine (AdoMet) from methionine and ATP. The overall synthetic reaction is composed of two sequential steps, AdoMet formation and the subsequent tripolyphosphate hydrolysis which occurs prior to release of AdoMet from the enzyme. The sequence is that of S-adenosylmethionine synthase from Synechococcus sp. (strain CC9902).